The following is a 147-amino-acid chain: Small ribosomal subunit protein uS12 (147 aa).

This sequence belongs to the universal ribosomal protein uS12 family. As to quaternary structure, part of the 30S ribosomal subunit.

Its function is as follows. With S4 and S5 plays an important role in translational accuracy. Located at the interface of the 30S and 50S subunits. The sequence is that of Small ribosomal subunit protein uS12 from Sulfolobus acidocaldarius (strain ATCC 33909 / DSM 639 / JCM 8929 / NBRC 15157 / NCIMB 11770).